We begin with the raw amino-acid sequence, 557 residues long: Potassium-transporting ATPase potassium-binding subunit (557 aa).

Transmembrane regions (helical) follow at residues 5–25 (GFLL…PLGS), 63–83 (LCAI…MLLG), 132–152 (GLTV…FALI), 170–190 (LLRI…LFFI), 253–273 (FVQM…FGEV), 283–303 (LLWA…WAEV), 329–349 (VLVS…AVIA), 356–376 (ALGG…FGGV), 379–399 (GLYG…LMIG), 416–436 (LTAL…ALAM), 484–504 (LLAF…MAIA), and 526–546 (LFVG…FIPA).

This sequence belongs to the KdpA family. As to quaternary structure, the system is composed of three essential subunits: KdpA, KdpB and KdpC.

The protein localises to the cell inner membrane. In terms of biological role, part of the high-affinity ATP-driven potassium transport (or Kdp) system, which catalyzes the hydrolysis of ATP coupled with the electrogenic transport of potassium into the cytoplasm. This subunit binds the periplasmic potassium ions and delivers the ions to the membrane domain of KdpB through an intramembrane tunnel. The sequence is that of Potassium-transporting ATPase potassium-binding subunit from Escherichia coli O157:H7.